We begin with the raw amino-acid sequence, 480 residues long: MATPIDVVIMAAGKGTRMKSALPKVLHQLGGRALLAHVIDCAARLSARQAVVIAGHGAADVEAACAHLTRAAGDARQDLSLKFARQEPQLGTGHAVQQALPLLADDGVTLVLSGDVPLTQPATLRALLEQCDGQRLALLTLNMADPTGYGRIVRAGTQATAQASSQVRAIVEHKDATEAQRGIHEIYSGIMAVPTRLLRGWIHRLDNKNVQSEYYLTDIVKFAVADGVAVVAHQITDAAQVAGVNSPVQLAELERVYQLRQATALMEQGVRLADPARFDVRGTLQCGQDVEIDVNCVFAGQVSLGEGVRIGANCVIANATIAAGAVIHPFTHIDGEKLGVQVGEGALIGPFARLRPGAQLGAEVHIGNFVEVKNSTLAKGAKANHLAYLGDATVGERVNYGAGSITANYDGANKHRTVIEADVHIGSNCVLVAPVTIGQGGTVGGGSTITKDTPPGALSVARGKQVSLPNWKRPVKVSKG.

The tract at residues 1 to 247 is pyrophosphorylase; sequence MATPIDVVIM…AAQVAGVNSP (247 aa). UDP-N-acetyl-alpha-D-glucosamine is bound by residues K24, Q86, 91–92, 113–115, G150, E172, and N245; these read GT and SGD. Position 115 (D115) interacts with Mg(2+). N245 lines the Mg(2+) pocket. The interval 248-268 is linker; that stretch reads VQLAELERVYQLRQATALMEQ. Positions 269 to 480 are N-acetyltransferase; sequence GVRLADPARF…WKRPVKVSKG (212 aa). Residues R355 and K373 each coordinate UDP-N-acetyl-alpha-D-glucosamine. H385 functions as the Proton acceptor in the catalytic mechanism. Positions 388 and 399 each coordinate UDP-N-acetyl-alpha-D-glucosamine. Acetyl-CoA is bound by residues A402, 408-409, S427, G445, and R462; that span reads NY.

The protein in the N-terminal section; belongs to the N-acetylglucosamine-1-phosphate uridyltransferase family. It in the C-terminal section; belongs to the transferase hexapeptide repeat family. Homotrimer. Mg(2+) serves as cofactor.

It is found in the cytoplasm. It catalyses the reaction alpha-D-glucosamine 1-phosphate + acetyl-CoA = N-acetyl-alpha-D-glucosamine 1-phosphate + CoA + H(+). It carries out the reaction N-acetyl-alpha-D-glucosamine 1-phosphate + UTP + H(+) = UDP-N-acetyl-alpha-D-glucosamine + diphosphate. The protein operates within nucleotide-sugar biosynthesis; UDP-N-acetyl-alpha-D-glucosamine biosynthesis; N-acetyl-alpha-D-glucosamine 1-phosphate from alpha-D-glucosamine 6-phosphate (route II): step 2/2. It functions in the pathway nucleotide-sugar biosynthesis; UDP-N-acetyl-alpha-D-glucosamine biosynthesis; UDP-N-acetyl-alpha-D-glucosamine from N-acetyl-alpha-D-glucosamine 1-phosphate: step 1/1. It participates in bacterial outer membrane biogenesis; LPS lipid A biosynthesis. In terms of biological role, catalyzes the last two sequential reactions in the de novo biosynthetic pathway for UDP-N-acetylglucosamine (UDP-GlcNAc). The C-terminal domain catalyzes the transfer of acetyl group from acetyl coenzyme A to glucosamine-1-phosphate (GlcN-1-P) to produce N-acetylglucosamine-1-phosphate (GlcNAc-1-P), which is converted into UDP-GlcNAc by the transfer of uridine 5-monophosphate (from uridine 5-triphosphate), a reaction catalyzed by the N-terminal domain. The protein is Bifunctional protein GlmU of Polaromonas sp. (strain JS666 / ATCC BAA-500).